The following is a 279-amino-acid chain: Ribosomal RNA large subunit methyltransferase E (279 aa).

Basic and acidic residues predominate over residues 1–10; the sequence is MSDDDQKPED. The segment at 1–66 is disordered; it reads MSDDDQKPED…MKKGGDARAA (66 aa). Positions 136, 138, 154, 170, and 194 each coordinate S-adenosyl-L-methionine. The Proton acceptor role is filled by Lys234.

This sequence belongs to the class I-like SAM-binding methyltransferase superfamily. RNA methyltransferase RlmE family.

The protein resides in the cytoplasm. The enzyme catalyses uridine(2552) in 23S rRNA + S-adenosyl-L-methionine = 2'-O-methyluridine(2552) in 23S rRNA + S-adenosyl-L-homocysteine + H(+). Specifically methylates the uridine in position 2552 of 23S rRNA at the 2'-O position of the ribose in the fully assembled 50S ribosomal subunit. This chain is Ribosomal RNA large subunit methyltransferase E, found in Maricaulis maris (strain MCS10) (Caulobacter maris).